The following is a 198-amino-acid chain: MIIGYARKSTHLQDVTHQVDELTKAGCEQIYHEQISRGGSKRAKNGAPELENCLKALREGDTLVVWALDRLGGSLSQVITLLDDLKKRGITFIAIKDRIDTSAPVIGEIYTHLMAIFSNFERNRNIERTRSGLAAARARGRVGGRKPSLSEDDINEMKILLADPEMTVGAVAKRFNVSRMTIYRYTTKGNHSEKINDE.

The Resolvase/invertase-type recombinase catalytic domain maps to 1 to 140 (MIIGYARKST…SGLAAARARG (140 aa)). Serine 9 functions as the O-(5'-phospho-DNA)-serine intermediate in the catalytic mechanism. Residues 168–187 (VGAVAKRFNVSRMTIYRYTT) constitute a DNA-binding region (H-T-H motif).

The protein belongs to the site-specific recombinase resolvase family.

In terms of biological role, cooperates with the mucAB genes in the DNA repair process. Could be a resolvase-invertase protein. This Escherichia coli protein is Protein uvp1 (uvp1).